Here is a 394-residue protein sequence, read N- to C-terminus: Phosphoglycerate kinase (394 aa).

Substrate-binding positions include 21–23 (DFN), Arg-36, 59–62 (HLGR), Arg-118, and Arg-151. Ser-183 carries the phosphoserine modification. Positions 201 and 292 each coordinate ATP. The residue at position 299 (Thr-299) is a Phosphothreonine. ATP contacts are provided by residues Glu-323 and 350 to 353 (GGDS).

Belongs to the phosphoglycerate kinase family. Monomer.

It localises to the cytoplasm. It carries out the reaction (2R)-3-phosphoglycerate + ATP = (2R)-3-phospho-glyceroyl phosphate + ADP. Its pathway is carbohydrate degradation; glycolysis; pyruvate from D-glyceraldehyde 3-phosphate: step 2/5. This Bacillus cereus (strain B4264) protein is Phosphoglycerate kinase.